The chain runs to 313 residues: LOB domain-containing protein 36 (313 aa).

Residues 6–107 (SPCAACKFLR…HDLENAKKEL (102 aa)) form the LOB domain. The segment at 245–313 (GNFVDSPSTN…SEEGRRNVIG (69 aa)) is disordered. Residues 249 to 260 (DSPSTNNNYHTD) show a composition bias toward polar residues. The segment covering 280-302 (PSQSSQPLPLQTQETQTQTQPNS) has biased composition (low complexity).

It belongs to the LOB domain-containing protein family. In terms of tissue distribution, expressed in trichomes, at the base of many lateral organs, including branching points of the inflorescence and floral organs and in the distal part of the pistil at stages when style and stigma start to develop. Also detected in pedicels and at the base of petals and sepals.

Its function is as follows. Controls the proximal-distal patterning in petals and the adaxial-abaxial determination of leaves. Involved in the repression of the homeobox gene BP. In Arabidopsis thaliana (Mouse-ear cress), this protein is LOB domain-containing protein 36 (LBD36).